Reading from the N-terminus, the 426-residue chain is Pyrophosphate--fructose 6-phosphate 1-phosphotransferase 1 (426 aa).

G15 is a diphosphate binding site. D114 is a binding site for Mg(2+). Substrate contacts are provided by residues 140–142 (TID), 186–188 (MGR), E247, and 308–311 (YELR). D142 functions as the Proton acceptor in the catalytic mechanism.

Belongs to the phosphofructokinase type A (PFKA) family. PPi-dependent PFK group II subfamily. Clade 'Short' sub-subfamily. As to quaternary structure, homotetramer. Mg(2+) is required as a cofactor.

It is found in the cytoplasm. It carries out the reaction beta-D-fructose 6-phosphate + diphosphate = beta-D-fructose 1,6-bisphosphate + phosphate + H(+). It participates in carbohydrate degradation; glycolysis; D-glyceraldehyde 3-phosphate and glycerone phosphate from D-glucose: step 3/4. Non-allosteric. Catalyzes the phosphorylation of D-fructose 6-phosphate, the first committing step of glycolysis. Uses inorganic phosphate (PPi) as phosphoryl donor instead of ATP like common ATP-dependent phosphofructokinases (ATP-PFKs), which renders the reaction reversible, and can thus function both in glycolysis and gluconeogenesis. Consistently, PPi-PFK can replace the enzymes of both the forward (ATP-PFK) and reverse (fructose-bisphosphatase (FBPase)) reactions. The polypeptide is Pyrophosphate--fructose 6-phosphate 1-phosphotransferase 1 (Pfk1) (Trichomonas vaginalis (strain ATCC PRA-98 / G3)).